Consider the following 517-residue polypeptide: 2-isopropylmalate synthase (517 aa).

Residues 7–269 (VIIFDTTLRD…ETGIDTTQIV (263 aa)) enclose the Pyruvate carboxyltransferase domain. Residues aspartate 16, histidine 204, histidine 206, and asparagine 240 each coordinate Mn(2+). Residues 366–517 (LADKKREIFD…KPKAQGSGTI (152 aa)) are required for the condensation reaction. Not required to bind substrate. The regulatory domain stretch occupies residues 395 to 517 (KFISQKISTE…KPKAQGSGTI (123 aa)).

The protein belongs to the alpha-IPM synthase/homocitrate synthase family. LeuA type 1 subfamily. As to quaternary structure, homodimer. Remains a homodimer in the presence of L-leucine. Requires Mn(2+) as cofactor.

The protein resides in the cytoplasm. The catalysed reaction is 3-methyl-2-oxobutanoate + acetyl-CoA + H2O = (2S)-2-isopropylmalate + CoA + H(+). It participates in amino-acid biosynthesis; L-leucine biosynthesis; L-leucine from 3-methyl-2-oxobutanoate: step 1/4. With respect to regulation, inhibited by 3-bromo substituents and Leu, the pathway end product. Functionally, catalyzes the condensation of the acetyl group of acetyl-CoA with 3-methyl-2-oxobutanoate (2-ketoisovalerate) to form 3-carboxy-3-hydroxy-4-methylpentanoate (2-isopropylmalate). Complements an E.coli deletion. The sequence is that of 2-isopropylmalate synthase from Neisseria meningitidis serogroup B (strain ATCC BAA-335 / MC58).